A 122-amino-acid polypeptide reads, in one-letter code: Large ribosomal subunit protein uL14 (122 aa).

The protein belongs to the universal ribosomal protein uL14 family. In terms of assembly, part of the 50S ribosomal subunit. Forms a cluster with proteins L3 and L19. In the 70S ribosome, L14 and L19 interact and together make contacts with the 16S rRNA in bridges B5 and B8.

Its function is as follows. Binds to 23S rRNA. Forms part of two intersubunit bridges in the 70S ribosome. In Buchnera aphidicola subsp. Acyrthosiphon pisum (strain 5A), this protein is Large ribosomal subunit protein uL14.